The sequence spans 119 residues: Basic phospholipase A2 acanthin-1 (119 aa).

Cystine bridges form between Cys11-Cys71, Cys27-Cys118, Cys29-Cys45, Cys44-Cys99, Cys51-Cys92, Cys60-Cys85, and Cys78-Cys90. Tyr28, Gly30, and Gly32 together coordinate Ca(2+). Residue His48 is part of the active site. Position 49 (Asp49) interacts with Ca(2+). Asp93 is a catalytic residue.

It depends on Ca(2+) as a cofactor. In terms of tissue distribution, expressed by the venom gland.

The protein localises to the secreted. It carries out the reaction a 1,2-diacyl-sn-glycero-3-phosphocholine + H2O = a 1-acyl-sn-glycero-3-phosphocholine + a fatty acid + H(+). In terms of biological role, snake venom phospholipase A2 (PLA2) that potently inhibits ADP-(IC(50)=10 nM) and collagen-induced (IC(50)=7 nM) platelet aggregation when tested on human whole blood. PLA2 catalyzes the calcium-dependent hydrolysis of the 2-acyl groups in 3-sn-phosphoglycerides. This Acanthophis antarcticus (Common death adder) protein is Basic phospholipase A2 acanthin-1.